The following is a 480-amino-acid chain: Vinorine hydroxylase (480 aa).

Residues 3–23 (LLQILLAIAGLLAILLLQKQW) form a helical membrane-spanning segment. Residue Cys-418 participates in heme binding.

Belongs to the cytochrome P450 family. Heme is required as a cofactor. As to expression, mainly expressed in roots and, to a lesser extent, in leaves.

It localises to the membrane. The enzyme catalyses vinorine + reduced [NADPH--hemoprotein reductase] + O2 = vomilenine + oxidized [NADPH--hemoprotein reductase] + H2O + H(+). The catalysed reaction is vomilenine = perakine. It functions in the pathway alkaloid biosynthesis; ajmaline biosynthesis. In terms of biological role, a cytochrome P450 monooxygenase involved in the biosynthesis of ajmaline-type monoterpenoid indole alkaloids (MIAs) natural products, important plant-derived pharmaceuticals used in the therapy of heart disorders. Catalyzes the hydroxylation of vinorine to vomilenine, an intermediate chemical in the biosynthesis of ajmaline. Supports also vomilenine isomerization to perakine. This is Vinorine hydroxylase from Rauvolfia serpentina (Serpentine wood).